Here is a 411-residue protein sequence, read N- to C-terminus: Carbohydrate sulfotransferase 5 (411 aa).

The Cytoplasmic portion of the chain corresponds to 1–30 (MGMRARVPKVAHSTRRPPAARMWLPRFSSK). A helical; Signal-anchor for type II membrane protein transmembrane segment spans residues 31–48 (TVTVLLLAQTTCLLLFII). Topologically, residues 49 to 411 (SRPGPSSPAG…PDHFSWASPD (363 aa)) are lumenal. Position 71–77 (71–77 (WRSGSSF)) interacts with 3'-phosphoadenylyl sulfate. The N-linked (GlcNAc...) asparagine glycan is linked to asparagine 138. Residue 224–232 (RDPRAVLRS) participates in 3'-phosphoadenylyl sulfate binding. N-linked (GlcNAc...) asparagine glycosylation is found at asparagine 327 and asparagine 350.

The protein belongs to the sulfotransferase 1 family. Gal/GlcNAc/GalNAc subfamily. As to expression, predominantly expressed in small and large intestines and colon. Weakly expressed in lymphocytes. Not expressed in other tissues. Down-regulated in colonic adenocarcinomas.

The protein localises to the golgi apparatus membrane. Functionally, sulfotransferase that utilizes 3'-phospho-5'-adenylyl sulfate (PAPS) as sulfonate donor to catalyze the transfer of sulfate to position 6 of non-reducing N-acetylglucosamine (GlcNAc) residues and O-linked sugars of mucin-type acceptors. Acts on the non-reducing terminal GlcNAc of short carbohydrate substrates. However, it does not transfer sulfate to longer carbohydrate substrates that have poly-N-acetyllactosamine structures. Has no activity toward keratan. Not involved in generating HEV-expressed ligands for SELL. Its substrate specificity may be influenced by its subcellular location. In Homo sapiens (Human), this protein is Carbohydrate sulfotransferase 5 (CHST5).